The sequence spans 145 residues: Cytochrome b (145 aa).

The chain crosses the membrane as a helical span at residues 38 to 58 (FFALHFLLPFVLAALVIMHLI). Heme b contacts are provided by His42 and His56. His61 is an a ubiquinone binding site. The chain crosses the membrane as a helical span at residues 85-105 (FVFKDLVTVFIFFIVLSVFVF).

The protein belongs to the cytochrome b family. Fungal cytochrome b-c1 complex contains 10 subunits; 3 respiratory subunits, 2 core proteins and 5 low-molecular weight proteins. Cytochrome b-c1 complex is a homodimer. Requires heme b as cofactor.

Its subcellular location is the mitochondrion inner membrane. Component of the ubiquinol-cytochrome c reductase complex (complex III or cytochrome b-c1 complex) that is part of the mitochondrial respiratory chain. The b-c1 complex mediates electron transfer from ubiquinol to cytochrome c. Contributes to the generation of a proton gradient across the mitochondrial membrane that is then used for ATP synthesis. This chain is Cytochrome b (cob), found in Aspergillus fumigatus (Neosartorya fumigata).